A 161-amino-acid polypeptide reads, in one-letter code: Protein shisa-like-2B (161 aa).

The helical transmembrane segment at 65–85 threads the bilayer; the sequence is IGALIGLGIAALVLLAFVISV. The interval 115-134 is disordered; that stretch reads QEGNSNRKSKAPRSNAASNS.

It belongs to the shisa family.

Its subcellular location is the membrane. The chain is Protein shisa-like-2B (SHISAL2B) from Bos taurus (Bovine).